We begin with the raw amino-acid sequence, 126 residues long: Major sperm protein 3 (126 aa).

A2 is modified (N-acetylalanine). Positions 8-125 (DIATMPAQKV…RRKNLPIEYN (118 aa)) constitute an MSP domain.

Sperm.

Its subcellular location is the cell projection. The protein localises to the pseudopodium. The protein resides in the cytoplasm. It is found in the cytoskeleton. Central component in molecular interactions underlying sperm crawling. Forms an extensive filament system that extends from sperm villipoda, along the leading edge of the pseudopod. The protein is Major sperm protein 3 (MSP-3) of Globodera rostochiensis (Golden nematode worm).